Here is a 342-residue protein sequence, read N- to C-terminus: N-acetyl-gamma-glutamyl-phosphate reductase (342 aa).

The active site involves C149.

The protein belongs to the NAGSA dehydrogenase family. Type 1 subfamily.

It localises to the cytoplasm. It carries out the reaction N-acetyl-L-glutamate 5-semialdehyde + phosphate + NADP(+) = N-acetyl-L-glutamyl 5-phosphate + NADPH + H(+). It functions in the pathway amino-acid biosynthesis; L-arginine biosynthesis; N(2)-acetyl-L-ornithine from L-glutamate: step 3/4. Catalyzes the NADPH-dependent reduction of N-acetyl-5-glutamyl phosphate to yield N-acetyl-L-glutamate 5-semialdehyde. The protein is N-acetyl-gamma-glutamyl-phosphate reductase of Ruegeria pomeroyi (strain ATCC 700808 / DSM 15171 / DSS-3) (Silicibacter pomeroyi).